The sequence spans 589 residues: Formate--tetrahydrofolate ligase (589 aa).

74–81 (TPFGEGKS) is an ATP binding site.

It belongs to the formate--tetrahydrofolate ligase family.

It catalyses the reaction (6S)-5,6,7,8-tetrahydrofolate + formate + ATP = (6R)-10-formyltetrahydrofolate + ADP + phosphate. It participates in one-carbon metabolism; tetrahydrofolate interconversion. This is Formate--tetrahydrofolate ligase from Thermodesulfovibrio yellowstonii (strain ATCC 51303 / DSM 11347 / YP87).